We begin with the raw amino-acid sequence, 203 residues long: MATLDSNDKHDNHAPEAAGEFVSLRDHFLIAMPGLQDPIFSRSLTYICDHTAQGAMGIVVNQPMNLTLGDIFEQLELQDKAQQAGRAVLAGGPVNTERGFVLHRDSGAWESTMHIAPDVNLTASRDIVHAIANNTGPKSSLFALGYAGWSAGQLEEEISANSWLTIPADSSIIFDIPVEDRWAAAARQLGIDIHLMSATAGHA.

The protein belongs to the UPF0301 (AlgH) family.

This Saccharophagus degradans (strain 2-40 / ATCC 43961 / DSM 17024) protein is UPF0301 protein Sde_3637.